Consider the following 205-residue polypeptide: Transmembrane emp24 domain-containing protein A (205 aa).

Positions 1–24 (MMNNKLLLLVIALLCIASNSIVES) are cleaved as a signal peptide. The Lumenal portion of the chain corresponds to 25 to 172 (FSFKVSAKVE…RNTAESTNSR (148 aa)). The region spanning 34–116 (EECIYEEIGV…DKTVSFILSV (83 aa)) is the GOLD domain. The helical transmembrane segment at 173-193 (VLWWSVFEAFVLIALSIWQIY) threads the bilayer. At 194–205 (YLRRFFEVKRAV) the chain is on the cytoplasmic side.

It belongs to the EMP24/GP25L family.

The protein resides in the cytoplasmic vesicle membrane. Functionally, could have a role in the budding of coatomer-coated and other species of coated vesicles. In Dictyostelium discoideum (Social amoeba), this protein is Transmembrane emp24 domain-containing protein A (empA).